The primary structure comprises 303 residues: Oxygen-dependent coproporphyrinogen-III oxidase (303 aa).

Residue S94 participates in substrate binding. The a divalent metal cation site is built by H98 and H108. H108 (proton donor) is an active-site residue. 110–112 lines the substrate pocket; the sequence is NVR. Residues H147 and H177 each contribute to the a divalent metal cation site. The segment at 242 to 277 is important for dimerization; the sequence is YVEFNLVYDRGTLFGLQTGGRTESILMSLPPLVRWE. Residue 260–262 participates in substrate binding; that stretch reads GGR.

It belongs to the aerobic coproporphyrinogen-III oxidase family. In terms of assembly, homodimer. A divalent metal cation is required as a cofactor.

It localises to the cytoplasm. The enzyme catalyses coproporphyrinogen III + O2 + 2 H(+) = protoporphyrinogen IX + 2 CO2 + 2 H2O. Its pathway is porphyrin-containing compound metabolism; protoporphyrin-IX biosynthesis; protoporphyrinogen-IX from coproporphyrinogen-III (O2 route): step 1/1. Functionally, involved in the heme biosynthesis. Catalyzes the aerobic oxidative decarboxylation of propionate groups of rings A and B of coproporphyrinogen-III to yield the vinyl groups in protoporphyrinogen-IX. The polypeptide is Oxygen-dependent coproporphyrinogen-III oxidase (Saccharophagus degradans (strain 2-40 / ATCC 43961 / DSM 17024)).